A 520-amino-acid polypeptide reads, in one-letter code: Maturase K (520 aa).

Belongs to the intron maturase 2 family. MatK subfamily.

The protein resides in the plastid. Its subcellular location is the chloroplast. Its function is as follows. Usually encoded in the trnK tRNA gene intron. Probably assists in splicing its own and other chloroplast group II introns. The chain is Maturase K from Beaucarnea recurvata (Elephant-foot tree).